A 120-amino-acid chain; its full sequence is Glycine cleavage system H protein (120 aa).

Residues 17-99 (IATVGITAHA…RGAGWFFKLK (83 aa)) form the Lipoyl-binding domain. At Lys-58 the chain carries N6-lipoyllysine.

It belongs to the GcvH family. The glycine cleavage system is composed of four proteins: P, T, L and H. (R)-lipoate is required as a cofactor.

The glycine cleavage system catalyzes the degradation of glycine. The H protein shuttles the methylamine group of glycine from the P protein to the T protein. This is Glycine cleavage system H protein from Allorhizobium ampelinum (strain ATCC BAA-846 / DSM 112012 / S4) (Agrobacterium vitis (strain S4)).